Reading from the N-terminus, the 390-residue chain is Protein DDI1 homolog (390 aa).

The active site involves Asp-205. The interval 322-344 (MHAPRHQDPATTATTASNPAAPV) is disordered. A compositionally biased stretch (low complexity) spans 330 to 343 (PATTATTASNPAAP).

It belongs to the DDI1 family.

The protein resides in the cytoplasm. With respect to regulation, inhibited by pepstatin, diazoacetyl-DL-norleucine methyl ester (DAN) and nelfinavir. Inhibited by the proteinase inhibitors lopinavir and ritonavir. In terms of biological role, aspartic protease. This chain is Protein DDI1 homolog, found in Leishmania major.